A 595-amino-acid polypeptide reads, in one-letter code: uncharacterized protein (595 aa).

Helical transmembrane passes span 64 to 84 (VVFL…LIVF), 86 to 106 (IFYA…IGVL), 239 to 259 (FYVI…PVAS), 281 to 301 (FYLW…GILP), 334 to 354 (VHFI…LFFI), 368 to 388 (MFGI…HFII), 504 to 524 (FIYV…SYIM), 547 to 567 (YLFQ…GILT), and 571 to 591 (IIAG…LFKF).

This sequence to M.jannaschii FlaJ.

Its subcellular location is the cell membrane. This is an uncharacterized protein from Methanocaldococcus jannaschii (strain ATCC 43067 / DSM 2661 / JAL-1 / JCM 10045 / NBRC 100440) (Methanococcus jannaschii).